We begin with the raw amino-acid sequence, 57 residues long: Plasma membrane proteolipid 3 (57 aa).

The helical transmembrane segment at 34–54 (INILLTILGYLPGIVHALYII) threads the bilayer.

Belongs to the UPF0057 (PMP3) family.

The protein resides in the cell membrane. Plays a role in the regulation of membrane potential. Could mediate a proton leak. This chain is Plasma membrane proteolipid 3 (pmp-1), found in Neurospora crassa (strain ATCC 24698 / 74-OR23-1A / CBS 708.71 / DSM 1257 / FGSC 987).